The chain runs to 128 residues: Sirohydrochlorin cobaltochelatase (128 aa).

His9 acts as the Proton acceptor in catalysis. His9 contacts Co(2+). Residues Lys43 and 68 to 73 (FATGTH) each bind substrate. A Co(2+)-binding site is contributed by His73.

It belongs to the CbiX family. CbiXS subfamily. In terms of assembly, homotetramer; dimer of dimers.

It catalyses the reaction Co-sirohydrochlorin + 2 H(+) = sirohydrochlorin + Co(2+). It functions in the pathway cofactor biosynthesis; adenosylcobalamin biosynthesis; cob(II)yrinate a,c-diamide from sirohydrochlorin (anaerobic route): step 1/10. Catalyzes the insertion of Co(2+) into sirohydrochlorin as part of the anaerobic pathway to cobalamin biosynthesis. The polypeptide is Sirohydrochlorin cobaltochelatase (Saccharolobus solfataricus (strain ATCC 35092 / DSM 1617 / JCM 11322 / P2) (Sulfolobus solfataricus)).